The chain runs to 161 residues: Cyclic pyranopterin monophosphate synthase (161 aa).

Residues 73–75 and 110–111 contribute to the substrate site; these read LCH and ME. Residue D125 is part of the active site.

Belongs to the MoaC family. As to quaternary structure, homohexamer; trimer of dimers.

It catalyses the reaction (8S)-3',8-cyclo-7,8-dihydroguanosine 5'-triphosphate = cyclic pyranopterin phosphate + diphosphate. It participates in cofactor biosynthesis; molybdopterin biosynthesis. In terms of biological role, catalyzes the conversion of (8S)-3',8-cyclo-7,8-dihydroguanosine 5'-triphosphate to cyclic pyranopterin monophosphate (cPMP). This chain is Cyclic pyranopterin monophosphate synthase, found in Pseudomonas syringae pv. syringae (strain B728a).